A 432-amino-acid polypeptide reads, in one-letter code: Glutamate-1-semialdehyde 2,1-aminomutase (432 aa).

Position 272 is an N6-(pyridoxal phosphate)lysine (lysine 272).

This sequence belongs to the class-III pyridoxal-phosphate-dependent aminotransferase family. HemL subfamily. As to quaternary structure, homodimer. Requires pyridoxal 5'-phosphate as cofactor.

The protein localises to the cytoplasm. The enzyme catalyses (S)-4-amino-5-oxopentanoate = 5-aminolevulinate. Its pathway is porphyrin-containing compound metabolism; protoporphyrin-IX biosynthesis; 5-aminolevulinate from L-glutamyl-tRNA(Glu): step 2/2. It participates in porphyrin-containing compound metabolism; chlorophyll biosynthesis. This is Glutamate-1-semialdehyde 2,1-aminomutase from Picosynechococcus sp. (strain ATCC 27264 / PCC 7002 / PR-6) (Agmenellum quadruplicatum).